A 363-amino-acid polypeptide reads, in one-letter code: MAAARPTVSIYSKDGSVSSETIALPFVFKAPIRPDLVRSVHTAVAKNKRQPYAVSEKAGHQTSAESWGTGRALARIPRVGGGGTHRSGQAAFGNMCRSGRMFAPTKTWRKWHVKVNQNEKRYAISSAVAASGVPSLLLARGHRIEEIPEVPLVVDDAVQSFQKTKEAVALLKEIKAYRDVVKVANSRKLRAGKGKLRNRRHVQRRGPLVVFNEDAGIVKAFRNIPGVEIVNVRRLNLLQLAPGGHLGRFVIWTKSAFGLLDSVFGSTTEAAQLKKNYFLPENIISNADVTRLINSDEIQSIVKAAGPSRVKRAHVQKKNPLKNKAVLARLNPYAKAYKANVKLNTGKTPKAAGEKFLTVLHEN.

Ser-87 carries the post-translational modification Phosphoserine. Residues 280–363 (PENIISNADV…EKFLTVLHEN (84 aa)) form a C-terminal-extended nuclear localization signal region.

Belongs to the universal ribosomal protein uL4 family. Component of the large ribosomal subunit (LSU). Mature yeast ribosomes consist of a small (40S) and a large (60S) subunit. The 40S small subunit contains 1 molecule of ribosomal RNA (18S rRNA) and at least 33 different proteins. The large 60S subunit contains 3 rRNA molecules (25S, 5.8S and 5S rRNA) and at least 46 different proteins. uL4 is associated with the polypeptide exit tunnel. uL4 interacts with its chaperone ACL4 and the nuclear import receptor KAP104.

Its subcellular location is the cytoplasm. It localises to the nucleus. In terms of biological role, component of the ribosome, a large ribonucleoprotein complex responsible for the synthesis of proteins in the cell. The small ribosomal subunit (SSU) binds messenger RNAs (mRNAs) and translates the encoded message by selecting cognate aminoacyl-transfer RNA (tRNA) molecules. The large subunit (LSU) contains the ribosomal catalytic site termed the peptidyl transferase center (PTC), which catalyzes the formation of peptide bonds, thereby polymerizing the amino acids delivered by tRNAs into a polypeptide chain. The nascent polypeptides leave the ribosome through a tunnel in the LSU and interact with protein factors that function in enzymatic processing, targeting, and the membrane insertion of nascent chains at the exit of the ribosomal tunnel. uL4 participates in the regulation of the accumulation of its own mRNA. The polypeptide is Large ribosomal subunit protein uL4A (rpl402) (Schizosaccharomyces pombe (strain 972 / ATCC 24843) (Fission yeast)).